We begin with the raw amino-acid sequence, 144 residues long: Nucleoside diphosphate kinase (144 aa).

Residues Lys11, Phe59, Arg87, Thr93, Arg104, and Asn114 each contribute to the ATP site. His117 (pros-phosphohistidine intermediate) is an active-site residue.

The protein belongs to the NDK family. In terms of assembly, homotetramer. Requires Mg(2+) as cofactor.

Its subcellular location is the cytoplasm. The enzyme catalyses a 2'-deoxyribonucleoside 5'-diphosphate + ATP = a 2'-deoxyribonucleoside 5'-triphosphate + ADP. The catalysed reaction is a ribonucleoside 5'-diphosphate + ATP = a ribonucleoside 5'-triphosphate + ADP. Its function is as follows. Major role in the synthesis of nucleoside triphosphates other than ATP. The ATP gamma phosphate is transferred to the NDP beta phosphate via a ping-pong mechanism, using a phosphorylated active-site intermediate. This is Nucleoside diphosphate kinase from Sorangium cellulosum (strain So ce56) (Polyangium cellulosum (strain So ce56)).